Reading from the N-terminus, the 39-residue chain is Conotoxin Cl14.5 (39 aa).

A propeptide spanning residues Pro-1–Gly-16 is cleaved from the precursor. Pro-38 carries the post-translational modification Proline amide.

Contains 2 disulfide bonds. In terms of tissue distribution, expressed by the venom duct.

It localises to the secreted. This is Conotoxin Cl14.5 from Californiconus californicus (California cone).